The chain runs to 430 residues: MATFKRLLAWISDLRIAIGLLLVIALASALGTAIPQGELRESYLEGYSDKPWLGFVNGSMILRLQLDHVYTSSWFLALLAWLGLALILCSWRRQWPALQAALQWIDYQEPRQLSKLAIAETISSPPKNESIDKLAAHLHQQGWQVQQQPGRLAARRGIIGRAGPMLVHLGLVLLMLGAVWGSLGGNRLEQFLAPGRSLDLLNRDGNSHLKLTLTNFGIERDPAGRPEQFRSQLELLEPGQDTAKLHEVSVNHPLRFHGLTVYQADWSLAAITLQLGRSPQLQLPLRTFPELGEQVWGLVLPTNPDGSEPVLLSLTSEAGPVQVFDATGERLASLRPAGPTAEVKGIPIRIVDVLPASGLLLKRDPGVPLVYIGFLITLVGGGLSMIATRQLWAVGDPENECLHVGGLCNRNLTGFANELPSLLAAAVPQQ.

Helical transmembrane passes span 14–34 (LRIAIGLLLVIALASALGTAI), 72–92 (SSWFLALLAWLGLALILCSWR), and 162–182 (AGPMLVHLGLVLLMLGAVWGS).

This sequence belongs to the Ccs1/CcsB family. As to quaternary structure, may interact with CcsA.

It localises to the cellular thylakoid membrane. In terms of biological role, required during biogenesis of c-type cytochromes (cytochrome c6 and cytochrome f) at the step of heme attachment. This Prochlorococcus marinus (strain MIT 9313) protein is Cytochrome c biogenesis protein CcsB.